The chain runs to 90 residues: Sec-independent protein translocase protein TatA (90 aa).

The helical transmembrane segment at 1 to 21 (MGGASIWHWIVVGVIVMLLFG) threads the bilayer. The disordered stretch occupies residues 42–90 (GMADEDQPQAPVANQSPPPVSATEPVRTLPPHQGEPAPAANASVDRKVG).

The protein belongs to the TatA/E family. As to quaternary structure, the Tat system comprises two distinct complexes: a TatABC complex, containing multiple copies of TatA, TatB and TatC subunits, and a separate TatA complex, containing only TatA subunits. Substrates initially bind to the TatABC complex, which probably triggers association of the separate TatA complex to form the active translocon.

Its subcellular location is the cell inner membrane. Functionally, part of the twin-arginine translocation (Tat) system that transports large folded proteins containing a characteristic twin-arginine motif in their signal peptide across membranes. TatA could form the protein-conducting channel of the Tat system. In Methylobacterium nodulans (strain LMG 21967 / CNCM I-2342 / ORS 2060), this protein is Sec-independent protein translocase protein TatA.